The following is a 573-amino-acid chain: 2-succinyl-5-enolpyruvyl-6-hydroxy-3-cyclohexene-1-carboxylate synthase (573 aa).

It belongs to the TPP enzyme family. MenD subfamily. In terms of assembly, homodimer. Requires Mg(2+) as cofactor. It depends on Mn(2+) as a cofactor. Thiamine diphosphate is required as a cofactor.

It catalyses the reaction isochorismate + 2-oxoglutarate + H(+) = 5-enolpyruvoyl-6-hydroxy-2-succinyl-cyclohex-3-ene-1-carboxylate + CO2. It participates in quinol/quinone metabolism; 1,4-dihydroxy-2-naphthoate biosynthesis; 1,4-dihydroxy-2-naphthoate from chorismate: step 2/7. Its pathway is quinol/quinone metabolism; menaquinone biosynthesis. Functionally, catalyzes the thiamine diphosphate-dependent decarboxylation of 2-oxoglutarate and the subsequent addition of the resulting succinic semialdehyde-thiamine pyrophosphate anion to isochorismate to yield 2-succinyl-5-enolpyruvyl-6-hydroxy-3-cyclohexene-1-carboxylate (SEPHCHC). The chain is 2-succinyl-5-enolpyruvyl-6-hydroxy-3-cyclohexene-1-carboxylate synthase from Shewanella oneidensis (strain ATCC 700550 / JCM 31522 / CIP 106686 / LMG 19005 / NCIMB 14063 / MR-1).